We begin with the raw amino-acid sequence, 361 residues long: Putative agmatine deiminase (361 aa).

C354 functions as the Amidino-cysteine intermediate in the catalytic mechanism.

It belongs to the agmatine deiminase family.

It carries out the reaction agmatine + H2O = N-carbamoylputrescine + NH4(+). The chain is Putative agmatine deiminase from Streptococcus pneumoniae (strain Taiwan19F-14).